We begin with the raw amino-acid sequence, 283 residues long: MVSIIERAPAKINLGLDVLGKREDGYHDLEMVMISIDLCDYVTVSPLKDDVIMIESDCPKMPINEKNDVYKVAKLIKSRYAISEGVSILLNKKIPVCAGMGGGSSDAAATIRALNQLWDLKLSMEEMIAIGIAIGSDVPYCIQAGCAKIGGKGDRIELIDGKLSSWVVLVKPDFGISTRTVFPEIDCDVISRVDISAIVNALEGNNYSDLITHMGNALEDISIARKPFIQKVKDKMVAAGADVALMTGSGPTVFALCQTEKQANRVFNSVKGFCKEVYKVRTL.

Lysine 11 is a catalytic residue. Residue 95–105 (PVCAGMGGGSS) participates in ATP binding. Aspartate 137 is a catalytic residue.

It belongs to the GHMP kinase family. IspE subfamily.

It catalyses the reaction 4-CDP-2-C-methyl-D-erythritol + ATP = 4-CDP-2-C-methyl-D-erythritol 2-phosphate + ADP + H(+). Catalyzes the phosphorylation of the position 2 hydroxy group of 4-diphosphocytidyl-2C-methyl-D-erythritol. The polypeptide is Putative 4-diphosphocytidyl-2-C-methyl-D-erythritol kinase (ispE) (Streptococcus uberis (strain ATCC BAA-854 / 0140J)).